The following is a 432-amino-acid chain: Adenylosuccinate synthetase (432 aa).

GTP contacts are provided by residues 12–18 and 40–42; these read GDEGKGK and GHT. Asp13 (proton acceptor) is an active-site residue. The Mg(2+) site is built by Asp13 and Gly40. Residues 13 to 16, 38 to 41, Thr130, Arg144, Gln225, Thr240, and Arg304 contribute to the IMP site; these read DEGK and NAGH. His41 (proton donor) is an active-site residue. 300-306 contributes to the substrate binding site; sequence STTGRPR. GTP-binding positions include Arg306, 332–334, and 414–416; these read KLD and SVG.

It belongs to the adenylosuccinate synthetase family. In terms of assembly, homodimer. Mg(2+) is required as a cofactor.

It localises to the cytoplasm. The enzyme catalyses IMP + L-aspartate + GTP = N(6)-(1,2-dicarboxyethyl)-AMP + GDP + phosphate + 2 H(+). It participates in purine metabolism; AMP biosynthesis via de novo pathway; AMP from IMP: step 1/2. Plays an important role in the de novo pathway of purine nucleotide biosynthesis. Catalyzes the first committed step in the biosynthesis of AMP from IMP. The chain is Adenylosuccinate synthetase from Citrifermentans bemidjiense (strain ATCC BAA-1014 / DSM 16622 / JCM 12645 / Bem) (Geobacter bemidjiensis).